Consider the following 148-residue polypeptide: Snaclec B2 (148 aa).

Residues 1-24 (MGRLISVSFGLLVVFLSLSGTGAA) form the signal peptide. 3 cysteine pairs are disulfide-bonded: cysteine 27-cysteine 38, cysteine 55-cysteine 144, and cysteine 121-cysteine 136. One can recognise a C-type lectin domain in the interval 34–145 (YDQHCYKVFD…CRLLGHFVCK (112 aa)).

Belongs to the snaclec family. In terms of assembly, heterodimer; disulfide-linked. In terms of tissue distribution, expressed by the venom gland.

The protein resides in the secreted. Its function is as follows. Interferes with one step of hemostasis (modulation of platelet aggregation, or coagulation cascade, for example). The sequence is that of Snaclec B2 from Macrovipera lebetinus (Levantine viper).